A 151-amino-acid chain; its full sequence is Multiprotein-bridging factor 1 (151 aa).

The disordered stretch occupies residues 1–31; that stretch reads MSDWESHTVIGQKARAGGSGPRANVARTQGQ. One can recognise an HTH cro/C1-type domain in the interval 85-139; that stretch reads IARVRTEKKMSQKDLATKINEKPTVINDYEAGRAIPNQQVLGKMERALGVKLRGK. The H-T-H motif DNA-binding region spans 96–115; it reads QKDLATKINEKPTVINDYEA.

Belongs to the MBF1 family.

Its function is as follows. Transcriptional coactivator that stimulates GCN4-dependent transcriptional activity by bridging the DNA-binding region of GCN4 and TBP (SPT15), thereby recruiting TBP to GCN4-bound promoters. Involved in induction of the ribosome quality control (RQC) pathway; a pathway that degrades nascent peptide chains during problematic translation. Required to prevent stalled ribosomes from frameshifting. The sequence is that of Multiprotein-bridging factor 1 (MBF1) from Candida glabrata (strain ATCC 2001 / BCRC 20586 / JCM 3761 / NBRC 0622 / NRRL Y-65 / CBS 138) (Yeast).